The primary structure comprises 193 residues: MNTYKNSLNHFLNLVDCLEKIPNVGKKSAFKIAYHLGLENPYLALKITHALENALENLKTCTSCNALSESEVCEICSDESRQNSQLCMVLHPRDVFILEDLKDFLGRYYVLNSIEEVDFNALEKRLIEENIKEIIFAFPPTLANDSLMLYIEDKLQHFHLTFTKIAQGVPTGVNFENIDSVSLSRAFNSRIKA.

Residues C61–C76 form a C4-type zinc finger. The 87-residue stretch at S84 to P170 folds into the Toprim domain.

Belongs to the RecR family.

May play a role in DNA repair. It seems to be involved in an RecBC-independent recombinational process of DNA repair. It may act with RecF and RecO. This is Recombination protein RecR from Helicobacter pylori (strain HPAG1).